The following is a 1024-amino-acid chain: MPPFAKPETVLKRSEELINVGQHQAALAALNEIFTSRRFKQTPLQSLEPIMLRFVDLCVDLKKGRMAKEGLMQYKNVSQNTNAQSIELVIKHFIKLADAKVVEAQSKADAAVGEIDVDDLEESETPESMLLGSVSADQNKDRTDRVLVTPWLKFLWEAYRTALDILRNNARLEVPYQQIANQALKFCLQYQRKTEFRRLCEVLRQHLQNVARYSHHAHAINLTDQDTLQRHLDTRFAQLNSAVELELWQEAFRSVEDIHNLLTMAKKAPRPAMMANYYEKLARIFMVSDNNLFHAAAWNRYYALARSIAKSEQEHTQIASYVLISALAVPVISSNAPGTGNLHKSKSDFLQADHEARSRTGRLTSLLGLSRTPTRAGLLKEALNRDILKKARPELRELYNILEVEFHPLSICAKIEPILASISQDAEMAKYVKPLHSVVLTRLFQQLSQVYDAVKLSKVMQLVSAFKAPHSYTPAEIEKFCLNACKKGHLNIRIDHVAQAITFQDDVFSTDVHPAASASSEADNVGLQASPSELVRTQLSRLATCLDTTLKTIDPTILADAQAAKRHVFARAVAAAEDEHKAAIARKALLARRKELLEEMATRKEREEAAARAERARAAAEAEQKRIAEEQKKREQDRLNKEVEAVRIEEAKKMAKSLQERGGLKLSEEELANLDTDKLVQMQVEQIEKEKKELAERLRLIHRRMDHLERAYRREEAPLLSADYERQKQEDLQYHKAARITLLQTSKDKHAADLEIKKRLTRILPDYQQLRSIIEDKRRGEFEERRRKATEQIELEKERRRQQVRDERRRERQEAEEAERRRVQEEQEARARAEEEERLAEQRRVEEAQRAELEAKKRAEIEERRAKFQATADKQRQREEEAEANRRSRAAGTGAAPAQELAAADATWRRASGSPAPTQAESQRPPIFGAARTGGAGGWRERLAAKEAAGGNATAAPSAPAAAPAPASSGAYRPGMFRAAAGAGAGGRTDRVAATPLPPAAAAAESDGFTEVKKNVYRPPGRRA.

Positions 331 to 508 constitute a PCI domain; that stretch reads VISSNAPGTG…QAITFQDDVF (178 aa). 2 coiled-coil regions span residues 575–717 and 777–889; these read AAED…REEA and KRRG…RRSR. 2 stretches are compositionally biased toward basic and acidic residues: residues 797-866 and 873-886; these read KERR…ERRA and DKQRQREEEAEANR. 2 disordered regions span residues 797–973 and 1001–1024; these read KERR…GAYR and AAAAESDGFTEVKKNVYRPPGRRA. Composition is skewed to low complexity over residues 890–906 and 946–971; these read AAGTGAAPAQELAAADA and KEAAGGNATAAPSAPAAAPAPASSGA.

This sequence belongs to the eIF-3 subunit A family. Component of the eukaryotic translation initiation factor 3 (eIF-3) complex.

The protein resides in the cytoplasm. In terms of biological role, RNA-binding component of the eukaryotic translation initiation factor 3 (eIF-3) complex, which is involved in protein synthesis of a specialized repertoire of mRNAs and, together with other initiation factors, stimulates binding of mRNA and methionyl-tRNAi to the 40S ribosome. The eIF-3 complex specifically targets and initiates translation of a subset of mRNAs involved in cell proliferation. This Mycosarcoma maydis (Corn smut fungus) protein is Eukaryotic translation initiation factor 3 subunit A.